We begin with the raw amino-acid sequence, 369 residues long: D-glucosaminate-6-phosphate ammonia lyase (369 aa).

The residue at position 213 (K213) is an N6-(pyridoxal phosphate)lysine.

It belongs to the SelA family. It depends on pyridoxal 5'-phosphate as a cofactor.

It catalyses the reaction 2-amino-2-deoxy-D-gluconate 6-phosphate = 2-dehydro-3-deoxy-6-phospho-D-gluconate + NH4(+). Functionally, involved in the catabolism of D-glucosaminate. Catalyzes the conversion of D-glucosaminate 6-phosphate to yield keto-3-deoxygluconate 6-phosphate (KDGP). This chain is D-glucosaminate-6-phosphate ammonia lyase, found in Salmonella typhimurium (strain 14028s / SGSC 2262).